The chain runs to 1331 residues: Probable serine/threonine-protein kinase DDB_G0272254 (1331 aa).

3 stretches are compositionally biased toward low complexity: residues 1–42, 96–116, and 153–175; these read METS…NSSS, NDNN…NNNN, and TQQT…STPS. 3 disordered regions span residues 1–43, 92–132, and 150–175; these read METS…SSSA, DKIC…QQIS, and ILNT…STPS. 2 helical membrane passes run 201-221 and 224-244; these read FGFS…IYIL and FVLK…FVIY. Over residues 259–287 the composition is skewed to low complexity; it reads SINDSDSSSNNNNNNNNTTTTNNDSASTK. 4 disordered regions span residues 259–300, 320–419, 435–464, and 512–581; these read SIND…PETY, NLNN…LSKE, SVGK…SHNI, and AHSN…VVGN. Polar residues predominate over residues 288–299; it reads GNNNNEISSPET. Residues 436–450 show a composition bias toward polar residues; it reads VGKTHNRSSSGSDSI. Residues 514-531 show a composition bias toward low complexity; sequence SNNNNNNNNSNTNNNNNN. Residues 532–555 show a composition bias toward polar residues; sequence QSVSAPVSQLATPVYQTPGTNSVV. Residues 557–577 show a composition bias toward low complexity; sequence NLENDNENNNDSFSDINDNNS. Kelch repeat units follow at residues 665–710, 716–769, 770–816, 822–868, 909–959, and 962–1008; these read SLVL…NHDY, KFYL…RYGN, RFLL…GHTS, KLII…ELND, NIVM…LIKN, and KLFI…NNNN. Residues 834–860 are compositionally biased toward low complexity; the sequence is NNNNNNNNNNNNNNNNNNNNNNNNNNN. The segment at 834–862 is disordered; the sequence is NNNNNNNNNNNNNNNNNNNNNNNNNNNKG. The segment at 976–1042 is disordered; the sequence is NNNSSSGGNN…NNNNNNNNNN (67 aa). The region spanning 1073-1331 is the Protein kinase domain; sequence IKIDKEIGKG…EITNYLTKTF (259 aa). ATP-binding positions include 1079 to 1087 and Lys1100; that span reads IGKGHFSKV. Asp1200 functions as the Proton acceptor in the catalytic mechanism.

Belongs to the protein kinase superfamily. TKL Ser/Thr protein kinase family.

The protein resides in the membrane. It carries out the reaction L-seryl-[protein] + ATP = O-phospho-L-seryl-[protein] + ADP + H(+). The catalysed reaction is L-threonyl-[protein] + ATP = O-phospho-L-threonyl-[protein] + ADP + H(+). The polypeptide is Probable serine/threonine-protein kinase DDB_G0272254 (Dictyostelium discoideum (Social amoeba)).